The following is a 369-amino-acid chain: Beta-1,4-galactosyltransferase 2 (369 aa).

The Cytoplasmic segment spans residues 1–15; the sequence is MSRLLGGTLERVCKA. Residues 16–36 form a helical; Signal-anchor for type II membrane protein membrane-spanning segment; sequence VLLLCLLHFLVAVILYFDVYA. Residues 37–369 are Lumenal-facing; sequence QHLAFFSRFS…GRPMSWLNQG (333 aa). A compositionally biased stretch (polar residues) spans 59–75; that stretch reads SSSTNCSRPNATASSSG. A disordered region spans residues 59 to 90; that stretch reads SSSTNCSRPNATASSSGLPEVPSARPGPTAPV. Residues Asn63 and Asn68 are each glycosylated (N-linked (GlcNAc...) asparagine). A disulfide bridge connects residues Cys94 and Cys136. Residues 147–151, 186–188, 214–215, and Trp275 contribute to the UDP-alpha-D-galactose site; these read PFRHR, FNR, and VD. The cysteines at positions 208 and 227 are disulfide-linked. Asp215 contributes to the Mn(2+) binding site. 277-280 lines the N-acetyl-D-glucosamine pocket; the sequence is GEDD. His308 contributes to the Mn(2+) binding site. 308–310 provides a ligand contact to UDP-alpha-D-galactose; it reads HDR. Residue Arg320 coordinates N-acetyl-D-glucosamine. N-linked (GlcNAc...) asparagine glycosylation occurs at Asn354.

It belongs to the glycosyltransferase 7 family. It depends on Mn(2+) as a cofactor.

It is found in the golgi apparatus. Its subcellular location is the golgi stack membrane. The catalysed reaction is D-glucose + UDP-alpha-D-galactose = lactose + UDP + H(+). The enzyme catalyses an N-acetyl-beta-D-glucosaminyl derivative + UDP-alpha-D-galactose = a beta-D-galactosyl-(1-&gt;4)-N-acetyl-beta-D-glucosaminyl derivative + UDP + H(+). It catalyses the reaction N-acetyl-D-glucosamine + UDP-alpha-D-galactose = beta-D-galactosyl-(1-&gt;4)-N-acetyl-D-glucosamine + UDP + H(+). Its pathway is protein modification; protein glycosylation. In terms of biological role, responsible for the synthesis of complex-type N-linked oligosaccharides in many glycoproteins as well as the carbohydrate moieties of glycolipids. Can produce lactose. This is Beta-1,4-galactosyltransferase 2 (B4GALT2) from Cricetulus griseus (Chinese hamster).